Reading from the N-terminus, the 214-residue chain is FMN-dependent NADH:quinone oxidoreductase 1 (214 aa).

Residues 17-19 and 144-147 each bind FMN; these read SWS and SAGG.

Belongs to the azoreductase type 1 family. Homodimer. FMN serves as cofactor.

It carries out the reaction 2 a quinone + NADH + H(+) = 2 a 1,4-benzosemiquinone + NAD(+). It catalyses the reaction N,N-dimethyl-1,4-phenylenediamine + anthranilate + 2 NAD(+) = 2-(4-dimethylaminophenyl)diazenylbenzoate + 2 NADH + 2 H(+). Functionally, quinone reductase that provides resistance to thiol-specific stress caused by electrophilic quinones. In terms of biological role, also exhibits azoreductase activity. Catalyzes the reductive cleavage of the azo bond in aromatic azo compounds to the corresponding amines. This chain is FMN-dependent NADH:quinone oxidoreductase 1, found in Lactococcus lactis subsp. lactis (strain IL1403) (Streptococcus lactis).